Reading from the N-terminus, the 348-residue chain is tRNA N6-adenosine threonylcarbamoyltransferase (348 aa).

Fe cation contacts are provided by His114 and His118. Residues 137-141 (LVSGG), Asp171, Gly184, Asp188, and Asn283 contribute to the substrate site. Residue Asp311 coordinates Fe cation.

Belongs to the KAE1 / TsaD family. It depends on Fe(2+) as a cofactor.

It is found in the cytoplasm. The catalysed reaction is L-threonylcarbamoyladenylate + adenosine(37) in tRNA = N(6)-L-threonylcarbamoyladenosine(37) in tRNA + AMP + H(+). Its function is as follows. Required for the formation of a threonylcarbamoyl group on adenosine at position 37 (t(6)A37) in tRNAs that read codons beginning with adenine. Is involved in the transfer of the threonylcarbamoyl moiety of threonylcarbamoyl-AMP (TC-AMP) to the N6 group of A37, together with TsaE and TsaB. TsaD likely plays a direct catalytic role in this reaction. This is tRNA N6-adenosine threonylcarbamoyltransferase from Nocardioides sp. (strain ATCC BAA-499 / JS614).